Consider the following 505-residue polypeptide: Lysine--tRNA ligase (505 aa).

Residues Glu415 and Glu422 each contribute to the Mg(2+) site.

The protein belongs to the class-II aminoacyl-tRNA synthetase family. Homodimer. Mg(2+) serves as cofactor.

It is found in the cytoplasm. It catalyses the reaction tRNA(Lys) + L-lysine + ATP = L-lysyl-tRNA(Lys) + AMP + diphosphate. The protein is Lysine--tRNA ligase of Xanthomonas axonopodis pv. citri (strain 306).